A 345-amino-acid chain; its full sequence is NADH-ubiquinone oxidoreductase chain 2 (345 aa).

10 consecutive transmembrane segments (helical) span residues 1–21, 25–45, 59–79, 96–116, 123–143, 148–168, 191–211, 240–260, 274–294, and 324–344; these read MNPI…ILTM, HWVS…PIIS, YFLI…TNAY, IMLS…FWLP, PMIT…ALLI, LIPP…GGLG, ITIT…YILL, TASL…LSGF, HLTP…MFYL, and SLLS…PLMI.

Belongs to the complex I subunit 2 family.

It localises to the mitochondrion inner membrane. The enzyme catalyses a ubiquinone + NADH + 5 H(+)(in) = a ubiquinol + NAD(+) + 4 H(+)(out). In terms of biological role, core subunit of the mitochondrial membrane respiratory chain NADH dehydrogenase (Complex I) that is believed to belong to the minimal assembly required for catalysis. Complex I functions in the transfer of electrons from NADH to the respiratory chain. The immediate electron acceptor for the enzyme is believed to be ubiquinone. The sequence is that of NADH-ubiquinone oxidoreductase chain 2 (MT-ND2) from Varanus timorensis (Timor monitor).